The sequence spans 689 residues: Putative pentatricopeptide repeat-containing protein At3g15130 (689 aa).

PPR repeat units follow at residues Gln-5–Leu-39, Asn-40–Arg-70, Asn-71–Pro-105, Asn-106–Met-140, Met-141–Arg-171, Ser-172–Glu-206, Asp-209–Cys-243, Ser-246–Lys-276, Thr-277–Ile-311, Asp-312–Leu-342, Glu-347–Lys-377, Asp-378–Pro-412, Asp-413–Pro-448, and Arg-449–Lys-479. The tract at residues Ile-484–Glu-559 is type E motif. The type E(+) motif stretch occupies residues Arg-560–Arg-590. Positions Glu-592 to Trp-689 are type DYW motif.

Belongs to the PPR family. PCMP-H subfamily.

This Arabidopsis thaliana (Mouse-ear cress) protein is Putative pentatricopeptide repeat-containing protein At3g15130 (PCMP-H86).